The following is a 42-amino-acid chain: Large ribosomal subunit protein bL36 (42 aa).

This sequence belongs to the bacterial ribosomal protein bL36 family.

In Wolbachia pipientis wMel, this protein is Large ribosomal subunit protein bL36.